A 130-amino-acid polypeptide reads, in one-letter code: Small ribosomal subunit protein uS9 (130 aa).

It belongs to the universal ribosomal protein uS9 family.

This chain is Small ribosomal subunit protein uS9, found in Aromatoleum aromaticum (strain DSM 19018 / LMG 30748 / EbN1) (Azoarcus sp. (strain EbN1)).